We begin with the raw amino-acid sequence, 489 residues long: Dihydropyrimidinase 1 (489 aa).

Zn(2+) contacts are provided by histidine 61, histidine 63, and lysine 156. Position 156 is an N6-carboxylysine (lysine 156). Position 161 (tyrosine 161) interacts with substrate. The Zn(2+) site is built by histidine 189 and histidine 245. Serine 295 provides a ligand contact to substrate. Aspartate 323 is a binding site for Zn(2+). Asparagine 344 lines the substrate pocket.

Belongs to the metallo-dependent hydrolases superfamily. Hydantoinase/dihydropyrimidinase family. Homotetramer. Zn(2+) is required as a cofactor. In terms of processing, carboxylation allows a single lysine to coordinate two zinc ions. As to expression, in L1-L2 larvae, expressed in body hypodermal cells, hemidesmosomes and in a neuronal cell between the pharynx and ring neuropil. In adults, expression is seen in body hypodermal cells and pharynx.

Its subcellular location is the nucleus. The catalysed reaction is 5,6-dihydrouracil + H2O = 3-(carbamoylamino)propanoate + H(+). In Caenorhabditis elegans, this protein is Dihydropyrimidinase 1 (dhp-1).